A 179-amino-acid polypeptide reads, in one-letter code: MAKLHDFYRESVVPELMKEFSYNSVMQVPRIDKITLNMGVGEALADKKVLDNAVADLEAISGQKPIRTVARKSVAGFKVREGFPIGCKVTLRGERMWDFLQRLISIAIPRIRDFRGLNPKSFDGRGNYSMGVREQIIFPEVDYDKVDKVRGLDITITTNAGTDDEARALLAAFNFPFRK.

This sequence belongs to the universal ribosomal protein uL5 family. Part of the 50S ribosomal subunit; part of the 5S rRNA/L5/L18/L25 subcomplex. Contacts the 5S rRNA and the P site tRNA. Forms a bridge to the 30S subunit in the 70S ribosome.

Functionally, this is one of the proteins that bind and probably mediate the attachment of the 5S RNA into the large ribosomal subunit, where it forms part of the central protuberance. In the 70S ribosome it contacts protein S13 of the 30S subunit (bridge B1b), connecting the 2 subunits; this bridge is implicated in subunit movement. Contacts the P site tRNA; the 5S rRNA and some of its associated proteins might help stabilize positioning of ribosome-bound tRNAs. This is Large ribosomal subunit protein uL5 from Idiomarina loihiensis (strain ATCC BAA-735 / DSM 15497 / L2-TR).